Here is a 172-residue protein sequence, read N- to C-terminus: Transmembrane protein 91 (172 aa).

Disordered stretches follow at residues 1-31 (MDSP…RHEL) and 55-83 (PSVS…DWDG). Residues 1 to 97 (MDSPSLRELQ…SPFLPHDHLG (97 aa)) are Extracellular-facing. Residues 69-81 (VEDMSSSDSDSDW) are compositionally biased toward acidic residues. A helical membrane pass occupies residues 98–118 (LAVFSMLCCFWPVGIAAFCLA). Over 119–139 (QKTNKAWAKGDIQGAGAASRR) the chain is Cytoplasmic. Residues 140-160 (AFLLGVLAVGLGVCTYAAALV) traverse the membrane as a helical segment. The Extracellular portion of the chain corresponds to 161-172 (TLAAYLASRDPP).

The protein belongs to the CD225/Dispanin family.

Its subcellular location is the membrane. The protein is Transmembrane protein 91 (TMEM91) of Homo sapiens (Human).